Reading from the N-terminus, the 170-residue chain is Tubulin polymerization-promoting protein family member 2 (170 aa).

Positions Thr105–Val117 are enriched in low complexity. Residues Thr105–Gln170 are disordered. Positions Thr129–Thr149 are enriched in basic and acidic residues.

This sequence belongs to the TPPP family. In terms of tissue distribution, only expressed in male reproductive organs, including testis. Expressed in elongating spermatids at stages IV-VIII of the seminiferous epithelial cycle in testis and in mature sperm in the epididymis.

The protein localises to the cytoplasm. It localises to the cytosol. It is found in the cell projection. The protein resides in the cilium. Its subcellular location is the flagellum. Its function is as follows. Probable regulator of microtubule dynamics required for sperm motility. In contrast to other members of the family, has no microtubule bundling activity. This is Tubulin polymerization-promoting protein family member 2 from Mus musculus (Mouse).